Here is a 1086-residue protein sequence, read N- to C-terminus: Formin-like protein 2 (1086 aa).

A lipid anchor (N-myristoyl glycine) is attached at Gly-2. One can recognise a GBD/FH3 domain in the interval 23–469; sequence LPMPEPGELE…EAIQRQSTLE (447 aa). Ser-188 is modified (phosphoserine). Positions 513–597 are disordered; it reads SVGPTMGAAS…APPLPSAPPL (85 aa). The segment covering 525-537 has biased composition (pro residues); it reads PLPPPPPPLPPSS. Residues 538–547 show a composition bias toward polar residues; that stretch reads DTPETVQNGP. Pro residues-rich tracts occupy residues 548–576 and 583–597; these read VTPP…PLPG and PAPP…APPL. Residues 616–1007 form the FH2 domain; the sequence is IKKPIKTKFR…LMEKLLEQEA (392 aa). Residues 1040 to 1079 enclose the DAD domain; that stretch reads NRHVYEGKDGAIEDIITVLKTVPFTARTAKRGSRFFCEPV.

The protein belongs to the formin homology family.

It is found in the cytoplasm. In terms of biological role, plays a role in the regulation of cell morphology and cytoskeletal organization. Required in the cortical actin filament dynamics. The sequence is that of Formin-like protein 2 from Homo sapiens (Human).